Consider the following 323-residue polypeptide: Olfactory receptor 1E2 (323 aa).

The Extracellular segment spans residues 1–25 (MMGQNQTSISDFLLLGLPIQPEQQN). Residue Asn-5 is glycosylated (N-linked (GlcNAc...) asparagine). The helical transmembrane segment at 26 to 49 (LCYALFLAMYLTTLLGNLLIIVLI) threads the bilayer. Topologically, residues 50 to 57 (RLDSHLHT) are cytoplasmic. A helical transmembrane segment spans residues 58-79 (PVYLFLSNLSFSDLCFSSVTMP). Topologically, residues 80–100 (KLLQNMQNQDPSIPYADCLTQ) are extracellular. Cys-97 and Cys-198 are oxidised to a cystine. Residues 101-120 (MYFFLYFSDLESFLLVAMAY) traverse the membrane as a helical segment. Residues 121–148 (DRYVAICFPMHYTAICFLLHYTAIMSPM) are Cytoplasmic-facing. The chain crosses the membrane as a helical span at residues 149–167 (LCLSVVALSWVLTTFHAML). Topologically, residues 168 to 205 (HTLLMARLCFCADNVIPHFFCDMSALLKLACSDTRVNE) are extracellular. Residues 206–228 (WVIFIMGGLILVIPFLLILGSYA) traverse the membrane as a helical segment. The Cytoplasmic portion of the chain corresponds to 229–245 (RIVSSILKVPSSKGICK). A helical transmembrane segment spans residues 246–269 (AFSTCGSHLSVVSLFYGTVIGLYL). The Extracellular portion of the chain corresponds to 270-281 (CPSANSSTLKDT). N-linked (GlcNAc...) asparagine glycosylation occurs at Asn-274. A helical membrane pass occupies residues 282–301 (VMAMMYTVVTPMLTPFIYSL). Over 302–323 (RNRDMKGALERVICKRKNPFLL) the chain is Cytoplasmic.

This sequence belongs to the G-protein coupled receptor 1 family.

Its subcellular location is the cell membrane. Its function is as follows. Odorant receptor. In Homo sapiens (Human), this protein is Olfactory receptor 1E2 (OR1E2).